The chain runs to 234 residues: Probable porphobilinogen deaminase (234 aa).

Belongs to the HMBS family.

The enzyme catalyses 4 porphobilinogen + H2O = hydroxymethylbilane + 4 NH4(+). It functions in the pathway porphyrin-containing compound metabolism; protoporphyrin-IX biosynthesis; coproporphyrinogen-III from 5-aminolevulinate: step 2/4. In terms of biological role, tetrapolymerization of the monopyrrole PBG into the hydroxymethylbilane pre-uroporphyrinogen in several discrete steps. This is Probable porphobilinogen deaminase (hemC) from Chlamydia pneumoniae (Chlamydophila pneumoniae).